We begin with the raw amino-acid sequence, 455 residues long: Exodeoxyribonuclease 7 large subunit (455 aa).

It belongs to the XseA family. Heterooligomer composed of large and small subunits.

The protein resides in the cytoplasm. It carries out the reaction Exonucleolytic cleavage in either 5'- to 3'- or 3'- to 5'-direction to yield nucleoside 5'-phosphates.. Its function is as follows. Bidirectionally degrades single-stranded DNA into large acid-insoluble oligonucleotides, which are then degraded further into small acid-soluble oligonucleotides. In Escherichia coli O7:K1 (strain IAI39 / ExPEC), this protein is Exodeoxyribonuclease 7 large subunit.